Reading from the N-terminus, the 636-residue chain is Chaperone protein HtpG (636 aa).

Positions 1–349 (MAKHQFQTEV…SEDLPLNVSR (349 aa)) are a; substrate-binding. The segment at 350–562 (EILQENRILA…ADAQMAAMAH (213 aa)) is b. Positions 563–636 (MFRAMGQAMP…RLSRITAKAL (74 aa)) are c.

Belongs to the heat shock protein 90 family. Homodimer.

The protein resides in the cytoplasm. Its function is as follows. Molecular chaperone. Has ATPase activity. The polypeptide is Chaperone protein HtpG (Aliarcobacter butzleri (strain RM4018) (Arcobacter butzleri)).